A 130-amino-acid chain; its full sequence is Small ribosomal subunit protein uS11 (130 aa).

Belongs to the universal ribosomal protein uS11 family. Part of the 30S ribosomal subunit. Interacts with proteins S7 and S18. Binds to IF-3.

Located on the platform of the 30S subunit, it bridges several disparate RNA helices of the 16S rRNA. Forms part of the Shine-Dalgarno cleft in the 70S ribosome. The polypeptide is Small ribosomal subunit protein uS11 (Prochlorococcus marinus (strain AS9601)).